We begin with the raw amino-acid sequence, 365 residues long: MAVVAPRTLLLLLSGALALTQTWAGSHSMRYFSTSVSRPGRGEPRFIAVGYVDDTQFVRFDSDAASQRMEPRAPWMEQEEPEYWDRQTQISKTNAQIELESLRIALRYYNQSEDGSHTIQRMYGCDVGSDGRFLRGYQQDAYDGKDYIASNEDLRSWTAADMAAEITKRKWEAAHFAEQLRAYLEGTCVEWLRRYLENGKETLQRTDAPKTHTTHQAVSDHEATLKCWALSFYPAEITLTWQRDGEDQTQDTELVETRPAGDGTFQKWAAVVVPSGQEQRYTCHVQHEGLPKPLTLRWEPSSQPTIPIVGIIAGLVLFGAVIAGAVVAAVRWRRKSSDRKGGSYSQAASSDSAQGSDVSLTACKV.

Positions 1-24 (MAVVAPRTLLLLLSGALALTQTWA) are cleaved as a signal peptide. The interval 25–114 (GSHSMRYFST…ALRYYNQSED (90 aa)) is alpha-1. Topologically, residues 25-308 (GSHSMRYFST…EPSSQPTIPI (284 aa)) are extracellular. N-linked (GlcNAc...) asparagine glycosylation occurs at Asn110. Residues 115–206 (GSHTIQRMYG…ENGKETLQRT (92 aa)) form an alpha-2 region. Intrachain disulfides connect Cys125/Cys188 and Cys227/Cys283. Residues 207-298 (DAPKTHTTHQ…GLPKPLTLRW (92 aa)) form an alpha-3 region. Positions 209 to 295 (PKTHTTHQAV…QHEGLPKPLT (87 aa)) constitute an Ig-like C1-type domain. A connecting peptide region spans residues 299–308 (EPSSQPTIPI). The helical transmembrane segment at 309–332 (VGIIAGLVLFGAVIAGAVVAAVRW) threads the bilayer. Residues 333-365 (RRKSSDRKGGSYSQAASSDSAQGSDVSLTACKV) lie on the Cytoplasmic side of the membrane. Residues 338 to 365 (DRKGGSYSQAASSDSAQGSDVSLTACKV) are disordered. Residues 342–359 (GSYSQAASSDSAQGSDVS) show a composition bias toward low complexity. Ser343 bears the Phosphoserine mark. The residue at position 344 (Tyr344) is a Phosphotyrosine. Phosphoserine occurs at positions 345, 349, 352, 356, and 359.

It belongs to the MHC class I family. In terms of assembly, heterodimer of an alpha chain and a beta chain (beta-2-microglobulin).

It localises to the membrane. Functionally, involved in the presentation of foreign antigens to the immune system. This is Class I histocompatibility antigen, Gogo-A*0501 alpha chain from Gorilla gorilla gorilla (Western lowland gorilla).